Reading from the N-terminus, the 251-residue chain is MPVHLLIVDALNLIRRIHAVQGTPCVDTCLHALEQLIGNSQPTHAVAVFDDEARAQGWRHQLLPDYKAGRPPMPDDLHQEMPALRDAFTRRGVPCWHVEGNEADDLAATLAVKVAAAGHEATIVSTDKGYCQLLRPEIRIRDYFQKRWLDAPFIESEFGVSPGQLADFWGLAGISSSKIPGVPGIGPKSATQLINDFGTLEALYERLDDVPDKWRKKLEAHRESAFVCRAVATLKTDLQLDGNLQQLRLHG.

D104 lines the Mg(2+) pocket. In terms of domain architecture, 5'-3' exonuclease spans 160 to 249 (VSPGQLADFW…LDGNLQQLRL (90 aa)). Positions 171, 172, 180, 182, and 185 each coordinate K(+). Positions 184-189 (GIGPKS) are interaction with DNA.

It belongs to the Xni family. Requires Mg(2+) as cofactor. K(+) serves as cofactor.

Has flap endonuclease activity. During DNA replication, flap endonucleases cleave the 5'-overhanging flap structure that is generated by displacement synthesis when DNA polymerase encounters the 5'-end of a downstream Okazaki fragment. The protein is Flap endonuclease Xni of Cronobacter sakazakii (strain ATCC BAA-894) (Enterobacter sakazakii).